Here is a 171-residue protein sequence, read N- to C-terminus: Lipoprotein signal peptidase (171 aa).

4 helical membrane-spanning segments follow: residues 12 to 32 (LAWL…KLYF), 42 to 62 (IVVI…AAFS), 70 to 90 (WQRW…VVWL), and 96 to 116 (NETW…GNLY). Catalysis depends on residues Asp126 and Asp145. The chain crosses the membrane as a helical span at residues 137–157 (YFPAFNVADSAITVGAVMLAL).

Belongs to the peptidase A8 family.

The protein resides in the cell inner membrane. The enzyme catalyses Release of signal peptides from bacterial membrane prolipoproteins. Hydrolyzes -Xaa-Yaa-Zaa-|-(S,diacylglyceryl)Cys-, in which Xaa is hydrophobic (preferably Leu), and Yaa (Ala or Ser) and Zaa (Gly or Ala) have small, neutral side chains.. It participates in protein modification; lipoprotein biosynthesis (signal peptide cleavage). In terms of biological role, this protein specifically catalyzes the removal of signal peptides from prolipoproteins. The chain is Lipoprotein signal peptidase from Pseudomonas putida (strain ATCC 47054 / DSM 6125 / CFBP 8728 / NCIMB 11950 / KT2440).